The sequence spans 626 residues: DNA mismatch repair protein MutL (626 aa).

Residues 377-413 (EEPQAVKQPTQLWQPSTKPIIEEPIQEEKSWDSNEEG) are disordered. Polar residues predominate over residues 383–393 (KQPTQLWQPST).

This sequence belongs to the DNA mismatch repair MutL/HexB family.

This protein is involved in the repair of mismatches in DNA. It is required for dam-dependent methyl-directed DNA mismatch repair. May act as a 'molecular matchmaker', a protein that promotes the formation of a stable complex between two or more DNA-binding proteins in an ATP-dependent manner without itself being part of a final effector complex. The polypeptide is DNA mismatch repair protein MutL (Bacillus anthracis (strain A0248)).